The chain runs to 354 residues: DNA polymerase IV (354 aa).

Residues isoleucine 14 to glycine 198 form the UmuC domain. Aspartate 18 and aspartate 116 together coordinate Mg(2+). Residue glutamate 117 is part of the active site.

Belongs to the DNA polymerase type-Y family. As to quaternary structure, monomer. The cofactor is Mg(2+).

The protein resides in the cytoplasm. The enzyme catalyses DNA(n) + a 2'-deoxyribonucleoside 5'-triphosphate = DNA(n+1) + diphosphate. Its function is as follows. Poorly processive, error-prone DNA polymerase involved in untargeted mutagenesis. Copies undamaged DNA at stalled replication forks, which arise in vivo from mismatched or misaligned primer ends. These misaligned primers can be extended by PolIV. Exhibits no 3'-5' exonuclease (proofreading) activity. May be involved in translesional synthesis, in conjunction with the beta clamp from PolIII. The chain is DNA polymerase IV from Streptococcus sanguinis (strain SK36).